Here is a 244-residue protein sequence, read N- to C-terminus: Phosphonates import ATP-binding protein PhnC 2 (244 aa).

Residues 6-244 (IECHNLETAY…LQAQFVVNNQ (239 aa)) enclose the ABC transporter domain. 41–48 (GLNGAGKS) serves as a coordination point for ATP.

It belongs to the ABC transporter superfamily. Phosphonates importer (TC 3.A.1.9.1) family. The complex is composed of two ATP-binding proteins (PhnC), two transmembrane proteins (PhnE) and a solute-binding protein (PhnD).

The protein resides in the cell inner membrane. The catalysed reaction is phosphonate(out) + ATP + H2O = phosphonate(in) + ADP + phosphate + H(+). Functionally, part of the ABC transporter complex PhnCDE involved in phosphonates import. Responsible for energy coupling to the transport system. The polypeptide is Phosphonates import ATP-binding protein PhnC 2 (Nostoc sp. (strain PCC 7120 / SAG 25.82 / UTEX 2576)).